Consider the following 469-residue polypeptide: 3-isopropylmalate dehydratase large subunit (469 aa).

Residues C350, C410, and C413 each coordinate [4Fe-4S] cluster.

It belongs to the aconitase/IPM isomerase family. LeuC type 1 subfamily. Heterodimer of LeuC and LeuD. It depends on [4Fe-4S] cluster as a cofactor.

It catalyses the reaction (2R,3S)-3-isopropylmalate = (2S)-2-isopropylmalate. The protein operates within amino-acid biosynthesis; L-leucine biosynthesis; L-leucine from 3-methyl-2-oxobutanoate: step 2/4. Catalyzes the isomerization between 2-isopropylmalate and 3-isopropylmalate, via the formation of 2-isopropylmaleate. This Rhizobium etli (strain ATCC 51251 / DSM 11541 / JCM 21823 / NBRC 15573 / CFN 42) protein is 3-isopropylmalate dehydratase large subunit.